Here is a 447-residue protein sequence, read N- to C-terminus: Asparagine--tRNA ligase (447 aa).

It belongs to the class-II aminoacyl-tRNA synthetase family. Homodimer.

The protein resides in the cytoplasm. It catalyses the reaction tRNA(Asn) + L-asparagine + ATP = L-asparaginyl-tRNA(Asn) + AMP + diphosphate + H(+). This Lactococcus lactis subsp. cremoris (strain MG1363) protein is Asparagine--tRNA ligase.